Consider the following 125-residue polypeptide: uncharacterized protein (125 aa).

It belongs to the anhydro-N-acetylmuramic acid kinase family.

This is an uncharacterized protein from Yersinia enterocolitica.